The primary structure comprises 311 residues: tRNA-cytidine(32) 2-sulfurtransferase (311 aa).

The PP-loop motif signature appears at 47–52 (SGGKDS). Residues cysteine 122, cysteine 125, and cysteine 213 each coordinate [4Fe-4S] cluster.

This sequence belongs to the TtcA family. Homodimer. The cofactor is Mg(2+). It depends on [4Fe-4S] cluster as a cofactor.

The protein resides in the cytoplasm. It carries out the reaction cytidine(32) in tRNA + S-sulfanyl-L-cysteinyl-[cysteine desulfurase] + AH2 + ATP = 2-thiocytidine(32) in tRNA + L-cysteinyl-[cysteine desulfurase] + A + AMP + diphosphate + H(+). Its pathway is tRNA modification. Its function is as follows. Catalyzes the ATP-dependent 2-thiolation of cytidine in position 32 of tRNA, to form 2-thiocytidine (s(2)C32). The sulfur atoms are provided by the cysteine/cysteine desulfurase (IscS) system. The polypeptide is tRNA-cytidine(32) 2-sulfurtransferase (Salmonella paratyphi A (strain ATCC 9150 / SARB42)).